We begin with the raw amino-acid sequence, 397 residues long: tRNA(Ile)-lysidine synthase (397 aa).

44–49 (SGGADS) is a binding site for ATP.

This sequence belongs to the tRNA(Ile)-lysidine synthase family.

The protein localises to the cytoplasm. It carries out the reaction cytidine(34) in tRNA(Ile2) + L-lysine + ATP = lysidine(34) in tRNA(Ile2) + AMP + diphosphate + H(+). In terms of biological role, ligates lysine onto the cytidine present at position 34 of the AUA codon-specific tRNA(Ile) that contains the anticodon CAU, in an ATP-dependent manner. Cytidine is converted to lysidine, thus changing the amino acid specificity of the tRNA from methionine to isoleucine. The chain is tRNA(Ile)-lysidine synthase from Rhodopirellula baltica (strain DSM 10527 / NCIMB 13988 / SH1).